Here is a 2319-residue protein sequence, read N- to C-terminus: A-kinase anchor protein 6 (2319 aa).

Polar residues-rich tracts occupy residues 1 to 12 (MLTMSVTLSPLR) and 324 to 339 (GVSS…AAQP). Disordered stretches follow at residues 1–24 (MLTM…TDAS), 301–369 (VDDK…NATP), 493–532 (SRLK…VPNG), 566–614 (LQLQ…PSHV), and 691–757 (TRLG…SATK). Residues 340-351 (SSETVQQESSSS) are compositionally biased toward low complexity. Polar residues-rich tracts occupy residues 518–532 (GKQA…VPNG) and 566–591 (LQLQ…SDNI). The span at 697 to 711 (SPSSSSDIASSLGES) shows a compositional bias: low complexity. Residues 735-754 (KYADEKSERASSSEKNESHS) are compositionally biased toward basic and acidic residues. Spectrin repeat units follow at residues 762-848 (QKLM…QLLE) and 1036-1150 (EKVD…LLDD). A Phosphoserine modification is found at Ser-1073. A disordered region spans residues 1250 to 1272 (KLGETSNEDPGYDEEADNHGGSQ). Over residues 1255–1265 (SNEDPGYDEEA) the composition is skewed to acidic residues. Residues Ser-1570 and Ser-1595 each carry the phosphoserine modification. 3 disordered regions span residues 1821–1842 (VSDE…PSDT), 1900–1925 (EGIP…SHGK), and 1963–1983 (KCPN…TEKS). 3 stretches are compositionally biased toward polar residues: residues 1830-1842 (DISS…PSDT), 1911-1920 (NVTSKVSENL), and 1972-1982 (NQSTASTPTEK). The interval 2063-2076 (IIDMASTALKSKSQ) is PKA-RII subunit binding domain. The span at 2198–2215 (FSDSSLSADDADTVALSS) shows a compositional bias: low complexity. The interval 2198 to 2319 (FSDSSLSADD…HEKRHRNMHR (122 aa)) is disordered.

As to quaternary structure, interacts with RII subunit of PKA, phosphatase 2B (calcineurin) and AKAP79. Interacts with SYNPO2. Highly expressed in cardiac and skeletal muscle, followed by brain.

Its subcellular location is the sarcoplasmic reticulum. The protein localises to the nucleus membrane. Its function is as follows. Binds to type II regulatory subunits of protein kinase A and anchors/targets them to the nuclear membrane or sarcoplasmic reticulum. May act as an adapter for assembling multiprotein complexes. This chain is A-kinase anchor protein 6 (AKAP6), found in Homo sapiens (Human).